The following is a 345-amino-acid chain: Viral Fc-gamma receptor-like protein UL119 (345 aa).

The signal sequence occupies residues 1 to 23; sequence MCSVLAIALVVALLGDMHPGVKS. The segment at 23-42 is disordered; it reads SSTTSAVTSPSNTTVTSTTS. Over 24–294 the chain is Virion surface; that stretch reads STTSAVTSPS…KSDPLFEDRL (271 aa). Residues asparagine 34, asparagine 48, asparagine 95, asparagine 104, asparagine 148, asparagine 179, asparagine 198, asparagine 217, asparagine 225, asparagine 241, asparagine 244, and asparagine 260 are each glycosylated (N-linked (GlcNAc...) asparagine; by host). Positions 91 to 190 constitute an Ig-like V-type domain; that stretch reads QVSLNATCKV…TWDLFTYPIY (100 aa). A helical transmembrane segment spans residues 295 to 317; the sequence is LAYGVLAFLVFMVIILLYVTYML. Residues 318–345 are Intravirion-facing; the sequence is ARRRDWSYKRLEEPVEEKKHPVPYFKQW.

Its subcellular location is the virion membrane. Functionally, serves as a receptor for the Fc part of human IgG. May thus be involved in interfering with host Ig-mediated immune responses. This is Viral Fc-gamma receptor-like protein UL119 (UL119/UL118) from Human cytomegalovirus (strain AD169) (HHV-5).